Reading from the N-terminus, the 147-residue chain is Probable 4-amino-4-deoxy-L-arabinose-phosphoundecaprenol flippase subunit ArnF (147 aa).

Topologically, residues 1 to 23 (MSNDHPQGQLPASPARSALKGYL) are cytoplasmic. A helical transmembrane segment spans residues 24–44 (YVLGSILLVTAAQLGMKWGVI). The Periplasmic segment spans residues 45–62 (QLPTWQMDLAVMLAHPLP). A helical transmembrane segment spans residues 63 to 83 (LLVILAGVGCYALSLLCWLAA). The Cytoplasmic segment spans residues 84-93 (LHSTPLNIAY). Residues 94–114 (PLLSTSYALVYLLAVNIPLFA) form a helical membrane-spanning segment. At 115-121 (EPLEPGK) the chain is on the periplasmic side. The chain crosses the membrane as a helical span at residues 122–142 (ALGVLFILLGAVLVGIKPAAG). Residues 143-147 (TKQTG) lie on the Cytoplasmic side of the membrane.

The protein belongs to the ArnF family. In terms of assembly, heterodimer of ArnE and ArnF.

The protein localises to the cell inner membrane. Its pathway is bacterial outer membrane biogenesis; lipopolysaccharide biosynthesis. Translocates 4-amino-4-deoxy-L-arabinose-phosphoundecaprenol (alpha-L-Ara4N-phosphoundecaprenol) from the cytoplasmic to the periplasmic side of the inner membrane. The chain is Probable 4-amino-4-deoxy-L-arabinose-phosphoundecaprenol flippase subunit ArnF from Aeromonas hydrophila subsp. hydrophila (strain ATCC 7966 / DSM 30187 / BCRC 13018 / CCUG 14551 / JCM 1027 / KCTC 2358 / NCIMB 9240 / NCTC 8049).